Here is a 92-residue protein sequence, read N- to C-terminus: N(2)-fixation sustaining protein CowN (92 aa).

It belongs to the CowN family.

Its function is as follows. Is required to sustain N(2)-dependent growth in the presence of low levels of carbon monoxide (CO). Probably acts by protecting the N(2) fixation ability of the nitrogenase complex, which is inactivated in the presence of CO. The polypeptide is N(2)-fixation sustaining protein CowN (Rhodopseudomonas palustris (strain HaA2)).